The following is a 50-amino-acid chain: Large ribosomal subunit protein bL33 (50 aa).

The protein belongs to the bacterial ribosomal protein bL33 family.

In Fusobacterium nucleatum subsp. nucleatum (strain ATCC 25586 / DSM 15643 / BCRC 10681 / CIP 101130 / JCM 8532 / KCTC 2640 / LMG 13131 / VPI 4355), this protein is Large ribosomal subunit protein bL33.